Reading from the N-terminus, the 209-residue chain is Ribonuclease HII (209 aa).

The 190-residue stretch at 20 to 209 (QLEIGIDEVG…KSFLTKLNLI (190 aa)) folds into the RNase H type-2 domain. The a divalent metal cation site is built by Asp-26, Glu-27, and Asp-122.

This sequence belongs to the RNase HII family. It depends on Mn(2+) as a cofactor. Mg(2+) is required as a cofactor.

It is found in the cytoplasm. The enzyme catalyses Endonucleolytic cleavage to 5'-phosphomonoester.. Endonuclease that specifically degrades the RNA of RNA-DNA hybrids. The sequence is that of Ribonuclease HII from Prochlorococcus marinus (strain MIT 9515).